The sequence spans 300 residues: Porphobilinogen deaminase (300 aa).

An S-(dipyrrolylmethanemethyl)cysteine modification is found at Cys-239.

The protein belongs to the HMBS family. In terms of assembly, monomer. The cofactor is dipyrromethane.

The catalysed reaction is 4 porphobilinogen + H2O = hydroxymethylbilane + 4 NH4(+). The protein operates within porphyrin-containing compound metabolism; protoporphyrin-IX biosynthesis; coproporphyrinogen-III from 5-aminolevulinate: step 2/4. Tetrapolymerization of the monopyrrole PBG into the hydroxymethylbilane pre-uroporphyrinogen in several discrete steps. This chain is Porphobilinogen deaminase, found in Francisella tularensis subsp. holarctica (strain OSU18).